We begin with the raw amino-acid sequence, 316 residues long: 4-hydroxy-3-methylbut-2-enyl diphosphate reductase (316 aa).

Cysteine 12 is a [4Fe-4S] cluster binding site. (2E)-4-hydroxy-3-methylbut-2-enyl diphosphate contacts are provided by histidine 41 and histidine 74. Positions 41 and 74 each coordinate dimethylallyl diphosphate. Positions 41 and 74 each coordinate isopentenyl diphosphate. Residue cysteine 96 coordinates [4Fe-4S] cluster. Histidine 124 is a binding site for (2E)-4-hydroxy-3-methylbut-2-enyl diphosphate. Histidine 124 contributes to the dimethylallyl diphosphate binding site. Histidine 124 is an isopentenyl diphosphate binding site. Glutamate 126 functions as the Proton donor in the catalytic mechanism. A (2E)-4-hydroxy-3-methylbut-2-enyl diphosphate-binding site is contributed by threonine 167. Cysteine 197 lines the [4Fe-4S] cluster pocket. Serine 225, serine 226, asparagine 227, and serine 269 together coordinate (2E)-4-hydroxy-3-methylbut-2-enyl diphosphate. Dimethylallyl diphosphate-binding residues include serine 225, serine 226, asparagine 227, and serine 269. Serine 225, serine 226, asparagine 227, and serine 269 together coordinate isopentenyl diphosphate.

It belongs to the IspH family. Homodimer. [4Fe-4S] cluster serves as cofactor.

The catalysed reaction is isopentenyl diphosphate + 2 oxidized [2Fe-2S]-[ferredoxin] + H2O = (2E)-4-hydroxy-3-methylbut-2-enyl diphosphate + 2 reduced [2Fe-2S]-[ferredoxin] + 2 H(+). The enzyme catalyses dimethylallyl diphosphate + 2 oxidized [2Fe-2S]-[ferredoxin] + H2O = (2E)-4-hydroxy-3-methylbut-2-enyl diphosphate + 2 reduced [2Fe-2S]-[ferredoxin] + 2 H(+). It participates in isoprenoid biosynthesis; dimethylallyl diphosphate biosynthesis; dimethylallyl diphosphate from (2E)-4-hydroxy-3-methylbutenyl diphosphate: step 1/1. It functions in the pathway isoprenoid biosynthesis; isopentenyl diphosphate biosynthesis via DXP pathway; isopentenyl diphosphate from 1-deoxy-D-xylulose 5-phosphate: step 6/6. Catalyzes the conversion of 1-hydroxy-2-methyl-2-(E)-butenyl 4-diphosphate (HMBPP) into a mixture of isopentenyl diphosphate (IPP) and dimethylallyl diphosphate (DMAPP). Acts in the terminal step of the DOXP/MEP pathway for isoprenoid precursor biosynthesis. The polypeptide is 4-hydroxy-3-methylbut-2-enyl diphosphate reductase (Shigella flexneri serotype 5b (strain 8401)).